We begin with the raw amino-acid sequence, 659 residues long: Protein SCARECROW 1 (659 aa).

Disordered stretches follow at residues 1–33 and 188–285; these read MGSSSLLLFPSSSSSATHSSYSPSSSSHAITSL and SDPA…KQRD. The span at 190-228 shows a compositional bias: pro residues; that stretch reads PAPPPPPPPSHPALLPPDATAPPPPPTSVAALPPPPPPQ. A compositionally biased stretch (low complexity) spans 258–271; that stretch reads AAAAAAAAAAALAA. A coiled-coil region spans residues 258 to 289; the sequence is AAAAAAAAAAALAAAKERKEEQRRKQRDEEGL. Over residues 272 to 285 the composition is skewed to basic and acidic residues; it reads AKERKEEQRRKQRD. The region spanning 282-652 is the GRAS domain; that stretch reads KQRDEEGLHL…LCLLTASAWR (371 aa). The leucine repeat I (LRI) stretch occupies residues 289-353; it reads LHLLTLLLQC…VSSCLGLYAP (65 aa). The LxCxE motif signature appears at 296–300; sequence LQCAE. The interval 372–437 is VHIID; it reads FQVFNGISPF…GGPPRVRLTG (66 aa). The VHIID motif lies at 403-407; the sequence is VHIID. The segment at 447–479 is leucine repeat II (LRII); that stretch reads ATGKRLSDFADTLGLPFEFCPVADKAGNLDPEK. The interval 488–575 is PFYRE; the sequence is VAVHWLRHSL…QQLLSREIRN (88 aa). Residues 578 to 652 form an SAW region; that stretch reads AVGGPARTGD…LCLLTASAWR (75 aa).

Belongs to the GRAS family. In terms of assembly, interacts with SHR1, but not with SHR2.

It is found in the nucleus. Transcription factor required for quiescent center cells specification and maintenance of surrounding stem cells, and for the asymmetric cell division involved in radial pattern formation in roots. Essential for cell division but not differentiation of the ground tissue. Regulates the radial organization of the shoot axial organs. Restricts SHR movment and sequesters it into the nucleus of the endodermis. The polypeptide is Protein SCARECROW 1 (SCR1) (Oryza sativa subsp. indica (Rice)).